Consider the following 253-residue polypeptide: CD151 antigen (253 aa).

The Cytoplasmic portion of the chain corresponds to 1-18 (MGEFNEKKTTCGTVCLKY). Residues Cys11 and Cys15 are each lipidated (S-palmitoyl cysteine). The helical transmembrane segment at 19-39 (LLFTYNCCFWLAGLAVMAVGI) threads the bilayer. Over 40–57 (WTLALKSDYISLLASGTY) the chain is Extracellular. The helical transmembrane segment at 58–78 (LATAYILVVAGAVVMVTGVLG) threads the bilayer. Topologically, residues 79-91 (CCATFKERRNLLR) are cytoplasmic. A helical transmembrane segment spans residues 92-112 (LYFILLLIIFLLEIIAGVLAY). At 113 to 221 (VYYQQLNTEL…LETFIQEHLR (109 aa)) the chain is on the extracellular side. N-linked (GlcNAc...) asparagine glycosylation is present at Asn159. A helical transmembrane segment spans residues 222-242 (VIGAVGTGIACVQVFGMIFTC). 2 S-palmitoyl cysteine lipidation sites follow: Cys242 and Cys243. Over 243 to 253 (CLYRSLKLEHY) the chain is Cytoplasmic.

Belongs to the tetraspanin (TM4SF) family. Interacts with integrins ITGA3:ITGB1, ITGA5:ITGB1, ITGA3:ITGB1 and ITGA6:ITGB4 and with CD9 and CD181. Interacts (via the second extracellular domain) with integrin ITGAV:ITGB3. Interacts with ITGA3; this interaction modulates ITGA3 glycosylation pattern. Interacts with F11R. Interacts with RAC1 and CDC42; these interactions mediate physical association of RAC1 and CDC42 with integrin adhesion receptor complexes. Post-translationally, palmitoylated. Palmitoylation by ZDHHC2 regulates CD151 expression, association with other tetraspanin family proteins and function in cell adhesion. In terms of processing, ubiquitinated by RNF128 on lysine residues present in the tetraspanin amino terminus via 'Lys-48'-linked ubiquitin leading to proteasomal degradation.

The protein localises to the cell membrane. Structural component of specialized membrane microdomains known as tetraspanin-enriched microdomains (TERMs), which act as platforms for receptor clustering and signaling. Plays a role in various cellular and molecular mechanism through its association with both integrin and non-integrin proteins. These interactions facilitate critical cellular functions, including cell-to-cell communication, wound healing, platelet aggregation, trafficking, cell motility, and angiogenesis. Via interaction with JAM-A/F11R and integrin ITGA3:ITGB1, promotes the recruitment of signaling molecules such as RAC1, CDC42 and RhoGTPases to facilitate the polarization of epithelial cells and the reorganization of the actin cytoskeleton, which are critical steps in cell migration process. Regulates the glycosylation pattern of ITGA3:ITGB1 thereby modulating its activity. Plays an essential role in the maintenance of central laminin-binding integrin ITGA6:ITGB4-containing adhesion complexes. Essential for the proper assembly of the glomerular and tubular basement membranes in kidney. Contributes to T-cell activation by modulating integrin signaling leading to activation of downstream targets PTK2 and MAPK1/MAPK3. The sequence is that of CD151 antigen (CD151) from Chlorocebus aethiops (Green monkey).